We begin with the raw amino-acid sequence, 375 residues long: Erythronate-4-phosphate dehydrogenase (375 aa).

Residues serine 45 and threonine 66 each coordinate substrate. NAD(+) is bound by residues aspartate 146 and threonine 175. Residue arginine 208 is part of the active site. NAD(+) is bound at residue aspartate 232. Residue glutamate 237 is part of the active site. The Proton donor role is filled by histidine 254. Glycine 257 contacts NAD(+). Residue tyrosine 258 participates in substrate binding.

The protein belongs to the D-isomer specific 2-hydroxyacid dehydrogenase family. PdxB subfamily. As to quaternary structure, homodimer.

It is found in the cytoplasm. It catalyses the reaction 4-phospho-D-erythronate + NAD(+) = (R)-3-hydroxy-2-oxo-4-phosphooxybutanoate + NADH + H(+). Its pathway is cofactor biosynthesis; pyridoxine 5'-phosphate biosynthesis; pyridoxine 5'-phosphate from D-erythrose 4-phosphate: step 2/5. Functionally, catalyzes the oxidation of erythronate-4-phosphate to 3-hydroxy-2-oxo-4-phosphonooxybutanoate. The sequence is that of Erythronate-4-phosphate dehydrogenase from Yersinia pseudotuberculosis serotype O:1b (strain IP 31758).